The following is a 408-amino-acid chain: Na(+)-translocating NADH-quinone reductase subunit F (408 aa).

Residues 4 to 24 (IYLGVGMFTIIVLVLVAIIMF) traverse the membrane as a helical segment. Positions 33–127 (GDVEILINDD…DMEIELPEEV (95 aa)) constitute a 2Fe-2S ferredoxin-type domain. Residues C70, C76, C79, and C111 each contribute to the [2Fe-2S] cluster site. Residues 130–270 (IRKWDCTVKS…SGPFGEFFAK (141 aa)) form the FAD-binding FR-type domain.

The protein belongs to the NqrF family. As to quaternary structure, composed of six subunits; NqrA, NqrB, NqrC, NqrD, NqrE and NqrF. Requires [2Fe-2S] cluster as cofactor. FAD is required as a cofactor.

The protein resides in the cell inner membrane. The enzyme catalyses a ubiquinone + n Na(+)(in) + NADH + H(+) = a ubiquinol + n Na(+)(out) + NAD(+). Functionally, NQR complex catalyzes the reduction of ubiquinone-1 to ubiquinol by two successive reactions, coupled with the transport of Na(+) ions from the cytoplasm to the periplasm. The first step is catalyzed by NqrF, which accepts electrons from NADH and reduces ubiquinone-1 to ubisemiquinone by a one-electron transfer pathway. This is Na(+)-translocating NADH-quinone reductase subunit F from Idiomarina loihiensis (strain ATCC BAA-735 / DSM 15497 / L2-TR).